Here is a 458-residue protein sequence, read N- to C-terminus: Vitamin K-dependent protein C (458 aa).

An N-terminal signal peptide occupies residues 1–27; sequence IPDDVGYRNQKTASKEGVCVVSKCQDG. Residues 28–36 constitute a propeptide that is removed on maturation; the sequence is PNTLPRAKR. The 46-residue stretch at 37–82 folds into the Gla domain; the sequence is ANSFLEELRPSSLERECVEEVCDLEEAKEIFQSVDDTLAFWYKYVD. 4-carboxyglutamate occurs at positions 42, 43, 50, 52, 55, 56, 61, 62, and 65. Cys53 and Cys58 are joined by a disulfide. 4 disulfide bridges follow: Cys86/Cys105, Cys95/Cys100, Cys99/Cys114, and Cys116/Cys125. EGF-like domains follow at residues 91 to 126 and 130 to 170; these read SEHP…SFCQ and RFSN…LQCE. Asp107 is subject to (3R)-3-hydroxyaspartate. A glycan (N-linked (GlcNAc...) asparagine) is linked at Asn133. 5 cysteine pairs are disulfide-bonded: Cys134–Cys145, Cys141–Cys154, Cys156–Cys169, Cys177–Cys316, and Cys235–Cys251. Residues 210 to 447 form the Peptidase S1 domain; sequence IDGKLTRRGD…YLDWIHSHIE (238 aa). His250 (charge relay system) is an active-site residue. Asn287 carries an N-linked (GlcNAc...) asparagine glycan. Catalysis depends on Asp296, which acts as the Charge relay system. The N-linked (GlcNAc...) asparagine glycan is linked to Asn352. 2 disulfides stabilise this stretch: Cys370–Cys384 and Cys395–Cys423. Ser399 serves as the catalytic Charge relay system.

The protein belongs to the peptidase S1 family. Synthesized as a single chain precursor, which is cleaved into a light chain and a heavy chain held together by a disulfide bond. The enzyme is then activated by thrombin, which cleaves a tetradecapeptide from the amino end of the heavy chain; this reaction, which occurs at the surface of endothelial cells, is strongly promoted by thrombomodulin. The vitamin K-dependent, enzymatic carboxylation of some Glu residues allows the modified protein to bind calcium. In terms of processing, the iron and 2-oxoglutarate dependent 3-hydroxylation of aspartate and asparagine is (R) stereospecific within EGF domains. Plasma; synthesized in the liver.

The protein localises to the secreted. It is found in the golgi apparatus. The protein resides in the endoplasmic reticulum. The enzyme catalyses Degradation of blood coagulation factors Va and VIIIa.. Functionally, protein C is a vitamin K-dependent serine protease that regulates blood coagulation by inactivating factors Va and VIIIa in the presence of calcium ions and phospholipids. Exerts a protective effect on the endothelial cell barrier function. The chain is Vitamin K-dependent protein C (PROC) from Oryctolagus cuniculus (Rabbit).